The primary structure comprises 159 residues: Urease subunit beta 2 (159 aa).

Residues 1–24 (MAKEPTKAAHPQPEQTKTNHKAHR) form a disordered region.

It belongs to the urease beta subunit family. Heterotrimer of UreA (gamma), UreB (beta) and UreC (alpha) subunits. Three heterotrimers associate to form the active enzyme.

It localises to the cytoplasm. It carries out the reaction urea + 2 H2O + H(+) = hydrogencarbonate + 2 NH4(+). Its pathway is nitrogen metabolism; urea degradation; CO(2) and NH(3) from urea (urease route): step 1/1. Functionally, disrupting the ure2 operon has no effect on urease activity, or pathogen survival in BALB/c mice when inoculated by gavage, but confers slightly enhanced resistance to low pH killing in vitro. The sequence is that of Urease subunit beta 2 from Brucella suis biovar 1 (strain 1330).